Reading from the N-terminus, the 500-residue chain is Type-2 serine--tRNA ligase (500 aa).

Residue Ala305 coordinates L-serine. Zn(2+) is bound at residue Cys307. Arg337 lines the L-serine pocket. ATP is bound by residues 337 to 339 and 348 to 349; these read RYE and RV. L-serine is bound by residues 354-356 and Gln401; that span reads RIE. Residue Glu356 coordinates Zn(2+). Position 430 (Glu430) interacts with ATP. Asn433 is an L-serine binding site. Cys459 lines the Zn(2+) pocket. Arg466 contacts ATP.

It belongs to the class-II aminoacyl-tRNA synthetase family. Type-2 seryl-tRNA synthetase subfamily. Homodimer. Zn(2+) is required as a cofactor.

The protein localises to the cytoplasm. It carries out the reaction tRNA(Ser) + L-serine + ATP = L-seryl-tRNA(Ser) + AMP + diphosphate + H(+). The enzyme catalyses tRNA(Sec) + L-serine + ATP = L-seryl-tRNA(Sec) + AMP + diphosphate + H(+). It functions in the pathway aminoacyl-tRNA biosynthesis; selenocysteinyl-tRNA(Sec) biosynthesis; L-seryl-tRNA(Sec) from L-serine and tRNA(Sec): step 1/1. Its function is as follows. Catalyzes the attachment of serine to tRNA(Ser). Is also able to aminoacylate tRNA(Sec) with serine, to form the misacylated tRNA L-seryl-tRNA(Sec), which will be further converted into selenocysteinyl-tRNA(Sec). The chain is Type-2 serine--tRNA ligase from Methanothrix thermoacetophila (strain DSM 6194 / JCM 14653 / NBRC 101360 / PT) (Methanosaeta thermophila).